The following is a 602-amino-acid chain: Elongation factor 4 (602 aa).

Residues 7-189 form the tr-type G domain; that stretch reads KYIRNFSIVA…AIVSKVPAPY (183 aa). Residues 19–24 and 136–139 contribute to the GTP site; these read DHGKST and NKID.

It belongs to the TRAFAC class translation factor GTPase superfamily. Classic translation factor GTPase family. LepA subfamily.

Its subcellular location is the cell membrane. It catalyses the reaction GTP + H2O = GDP + phosphate + H(+). Its function is as follows. Required for accurate and efficient protein synthesis under certain stress conditions. May act as a fidelity factor of the translation reaction, by catalyzing a one-codon backward translocation of tRNAs on improperly translocated ribosomes. Back-translocation proceeds from a post-translocation (POST) complex to a pre-translocation (PRE) complex, thus giving elongation factor G a second chance to translocate the tRNAs correctly. Binds to ribosomes in a GTP-dependent manner. The chain is Elongation factor 4 from Clostridium botulinum (strain Loch Maree / Type A3).